The chain runs to 278 residues: Putative cysteine-rich repeat secretory protein 17 (278 aa).

Residues Met1–Ser32 form the signal peptide. Gnk2-homologous domains lie at Tyr39–Asn142 and Tyr148–Phe265.

It belongs to the cysteine-rich repeat secretory protein family.

Its subcellular location is the secreted. This chain is Putative cysteine-rich repeat secretory protein 17 (CRRSP17), found in Arabidopsis thaliana (Mouse-ear cress).